A 504-amino-acid polypeptide reads, in one-letter code: Sugar transport protein 14 (504 aa).

The Cytoplasmic portion of the chain corresponds to 1–25 (MAGGALTDEGGLKRAHLYEHRITSY). Transmembrane regions (helical) follow at residues 26 to 46 (FIFA…DLGV), 84 to 104 (ILTL…FGAS), 121 to 141 (VSFF…MLIL), 144 to 164 (IFLG…LSEM), 171 to 191 (GTVN…ANLI), 205 to 225 (LSLG…LVLP), 286 to 308 (LVIG…ILFY), 315 to 337 (SLGF…LVVA), 352 to 372 (FLLL…GVTL), 382 to 402 (LPKS…LAYG), 428 to 448 (VVVC…LVSL), and 454 to 474 (GIFL…YFLL). The Cytoplasmic portion of the chain corresponds to 475–504 (PETKQVPIEEVYLLWRQHWLWKKYVEDVDE).

The protein belongs to the major facilitator superfamily. Sugar transporter (TC 2.A.1.1) family.

The protein localises to the membrane. Its function is as follows. Mediates an active uptake of hexoses, probably by sugar/hydrogen symport. This chain is Sugar transport protein 14 (STP14), found in Arabidopsis thaliana (Mouse-ear cress).